The sequence spans 440 residues: WAS/WASL-interacting protein family member 2 (440 aa).

Residues 1–18 (MPIPPPPPPPPGPPPPPT) show a composition bias toward pro residues. The segment at 1–36 (MPIPPPPPPPPGPPPPPTFHQANTEQPKLSRDEQRG) is disordered. In terms of domain architecture, WH2 spans 36 to 53 (GRGALLQDICKGTKLKKV). Arginine 37 is modified (asymmetric dimethylarginine). Residues 49-52 (KLKK) form a binds actin region. Disordered stretches follow at residues 56–387 (INDR…DSIT) and 419–440 (RIYP…PILR). Over residues 116 to 133 (PSSRAAAPRPPVSAASGR) the composition is skewed to low complexity. Polar residues predominate over residues 161–172 (RPNTTSSTGMKH). Composition is skewed to pro residues over residues 176 to 193 (APPP…PTPL), 222 to 236 (EGPP…PPSP), 249 to 262 (APPP…PGVP), and 356 to 378 (RGKP…PPPL).

Belongs to the verprolin family. Interacts with WASL and WASP, and this interaction results in cytoplasmic relocation of these two proteins along actin filaments. Interacts with NCK2 resulting in the localization to sites of focal adhesions. No interaction was seen with WASF2 and WASF3. In terms of tissue distribution, expressed mainly in brain, colon, lung and stomach (at protein level). Ubiquitously expressed, with high expression in brain, kidney, lung, and placenta.

It localises to the cytoplasm. It is found in the cytoskeleton. Plays an active role in the formation of cell surface protrusions downstream of activated PDGFB receptors. Plays an important role in actin-microspike formation through cooperation with WASL. May cooperate with WASP and WASL to induce mobilization and reorganization of the actin filament system. The protein is WAS/WASL-interacting protein family member 2 (WIPF2) of Homo sapiens (Human).